Consider the following 192-residue polypeptide: Imidazoleglycerol-phosphate dehydratase (192 aa).

It belongs to the imidazoleglycerol-phosphate dehydratase family.

The protein localises to the cytoplasm. The catalysed reaction is D-erythro-1-(imidazol-4-yl)glycerol 3-phosphate = 3-(imidazol-4-yl)-2-oxopropyl phosphate + H2O. It participates in amino-acid biosynthesis; L-histidine biosynthesis; L-histidine from 5-phospho-alpha-D-ribose 1-diphosphate: step 6/9. The protein is Imidazoleglycerol-phosphate dehydratase of Staphylococcus epidermidis (strain ATCC 12228 / FDA PCI 1200).